Here is a 169-residue protein sequence, read N- to C-terminus: Cell cycle link protein (169 aa).

The interval Leu9–Leu22 is binding to host SKP1 protein. An LXCXE motif, interaction with host RBR motif is present at residues Leu110–Glu114.

This sequence belongs to the nanovirus Clink protein family. Interacts with host SKP1. Interacts (via LXCXE domain) with host retinoblastoma-related protein 1 (RBR1). Interacts (via LXCXE domain) with retinoblastoma-related proteins (RBR).

In terms of biological role, interacts with and disrupts the function of host retinoblastoma-related proteins RBR, which are key regulators of the cell cycle. Induces transcriptional activation of E2F-regulated S-phase and G2/M-phase-specific genes. Inactivation of the ability of RBR to arrest the cell cycle leads to the stimulation of viral DNA replication. This chain is Cell cycle link protein (DNA-C), found in Cicer arietinum (Chickpea).